Here is a 129-residue protein sequence, read N- to C-terminus: Small ribosomal subunit protein uS11 (129 aa).

Belongs to the universal ribosomal protein uS11 family. In terms of assembly, part of the 30S ribosomal subunit. Interacts with proteins S7 and S18. Binds to IF-3.

Functionally, located on the platform of the 30S subunit, it bridges several disparate RNA helices of the 16S rRNA. Forms part of the Shine-Dalgarno cleft in the 70S ribosome. The polypeptide is Small ribosomal subunit protein uS11 (Erythrobacter litoralis (strain HTCC2594)).